Reading from the N-terminus, the 267-residue chain is 4-hydroxy-tetrahydrodipicolinate reductase (267 aa).

NAD(+) is bound by residues Gly-8–Met-13, Glu-34, Gly-98–Thr-100, and Ala-122–Met-125. The active-site Proton donor/acceptor is His-155. A (S)-2,3,4,5-tetrahydrodipicolinate-binding site is contributed by His-156. Lys-159 acts as the Proton donor in catalysis. Gly-165–Thr-166 contributes to the (S)-2,3,4,5-tetrahydrodipicolinate binding site.

Belongs to the DapB family.

Its subcellular location is the cytoplasm. The catalysed reaction is (S)-2,3,4,5-tetrahydrodipicolinate + NAD(+) + H2O = (2S,4S)-4-hydroxy-2,3,4,5-tetrahydrodipicolinate + NADH + H(+). It carries out the reaction (S)-2,3,4,5-tetrahydrodipicolinate + NADP(+) + H2O = (2S,4S)-4-hydroxy-2,3,4,5-tetrahydrodipicolinate + NADPH + H(+). Its pathway is amino-acid biosynthesis; L-lysine biosynthesis via DAP pathway; (S)-tetrahydrodipicolinate from L-aspartate: step 4/4. Functionally, catalyzes the conversion of 4-hydroxy-tetrahydrodipicolinate (HTPA) to tetrahydrodipicolinate. In Syntrophotalea carbinolica (strain DSM 2380 / NBRC 103641 / GraBd1) (Pelobacter carbinolicus), this protein is 4-hydroxy-tetrahydrodipicolinate reductase.